The chain runs to 442 residues: Trigger factor (442 aa).

Residues 163–248 (YDRVTINYCI…IIKIEKKQEL (86 aa)) enclose the PPIase FKBP-type domain.

This sequence belongs to the FKBP-type PPIase family. Tig subfamily.

It is found in the cytoplasm. It carries out the reaction [protein]-peptidylproline (omega=180) = [protein]-peptidylproline (omega=0). Its function is as follows. Involved in protein export. Acts as a chaperone by maintaining the newly synthesized protein in an open conformation. Functions as a peptidyl-prolyl cis-trans isomerase. The chain is Trigger factor from Buchnera aphidicola subsp. Acyrthosiphon pisum (strain 5A).